Here is a 64-residue protein sequence, read N- to C-terminus: Large ribosomal subunit protein uL29 (64 aa).

Belongs to the universal ribosomal protein uL29 family.

In Lacticaseibacillus paracasei (strain ATCC 334 / BCRC 17002 / CCUG 31169 / CIP 107868 / KCTC 3260 / NRRL B-441) (Lactobacillus paracasei), this protein is Large ribosomal subunit protein uL29.